A 323-amino-acid chain; its full sequence is Dolichyl-phosphate beta-glucosyltransferase ALG5A (323 aa).

The Lumenal portion of the chain corresponds to 1–5 (MKFWR). The chain crosses the membrane as a helical span at residues 6–26 (FVQILFFLGVAAVGLVVAVMI). Over 27–323 (ANADDTTLFD…GAWKIRDRRH (297 aa)) the chain is Cytoplasmic.

This sequence belongs to the glycosyltransferase 2 family.

Its subcellular location is the endoplasmic reticulum membrane. The catalysed reaction is a di-trans,poly-cis-dolichyl phosphate + UDP-alpha-D-glucose = a di-trans,poly-cis-dolichyl beta-D-glucosyl phosphate + UDP. The protein operates within protein modification; protein glycosylation. Dolichyl-phosphate beta-glucosyltransferase involved in the glycosylation of glycoproteins through the synthesis of dolichyl beta-D-glucosyl phosphate which serves as a sugar donor for transfer of three glucose residues to the Man-9-GlcNAc-2-PP-dolichol precursor to N-glycans. The polypeptide is Dolichyl-phosphate beta-glucosyltransferase ALG5A (Trichomonas vaginalis (strain ATCC PRA-98 / G3)).